Here is a 693-residue protein sequence, read N- to C-terminus: Elongation factor G (693 aa).

The region spanning Glu8–Leu282 is the tr-type G domain. GTP-binding positions include Ala17–Thr24, Asp81–His85, and Asn135–Asp138.

Belongs to the TRAFAC class translation factor GTPase superfamily. Classic translation factor GTPase family. EF-G/EF-2 subfamily.

The protein localises to the cytoplasm. Its function is as follows. Catalyzes the GTP-dependent ribosomal translocation step during translation elongation. During this step, the ribosome changes from the pre-translocational (PRE) to the post-translocational (POST) state as the newly formed A-site-bound peptidyl-tRNA and P-site-bound deacylated tRNA move to the P and E sites, respectively. Catalyzes the coordinated movement of the two tRNA molecules, the mRNA and conformational changes in the ribosome. This is Elongation factor G from Streptococcus mutans serotype c (strain ATCC 700610 / UA159).